A 539-amino-acid chain; its full sequence is 4-coumarate--CoA ligase 5 (539 aa).

ATP-binding residues include Ser-185, Ser-186, Gly-187, Thr-188, Thr-189, and Lys-193. Positions 235 and 239 each coordinate (E)-4-coumaroyl-AMP. Arg-256 lines the CoA pocket. The segment at 258 to 327 (DTVKMLQLVE…AKLPNAVLGQ (70 aa)) is SBD1. The (E)-4-coumaroyl-AMP site is built by Ala-305, Gln-327, Gly-328, Thr-332, and Met-340. 3 residues coordinate ATP: Gln-327, Gly-328, and Thr-332. The segment at 328 to 395 (GYGMTEAGPV…IRGKQIMKGY (68 aa)) is SBD2. Asp-416 and Arg-431 together coordinate ATP. The (E)-4-coumaroyl-AMP site is built by Lys-433 and Lys-437. Positions 439 and 440 each coordinate CoA. Lys-522 serves as a coordination point for ATP.

Belongs to the ATP-dependent AMP-binding enzyme family. Mg(2+) is required as a cofactor. Expressed in roots, stems, leaf blades, leaf sheaths and spikelets.

The catalysed reaction is (E)-ferulate + ATP + CoA = (E)-feruloyl-CoA + AMP + diphosphate. The enzyme catalyses (E)-4-coumarate + ATP + CoA = (E)-4-coumaroyl-CoA + AMP + diphosphate. It catalyses the reaction (E)-sinapate + ATP + CoA = (E)-sinapoyl-CoA + AMP + diphosphate. It carries out the reaction (E)-caffeate + ATP + CoA = (E)-caffeoyl-CoA + AMP + diphosphate. The catalysed reaction is (E)-cinnamate + ATP + CoA = (E)-cinnamoyl-CoA + AMP + diphosphate. The enzyme catalyses (E)-ferulate + ATP + H(+) = (E)-feruloyl-AMP + diphosphate. It catalyses the reaction (E)-feruloyl-AMP + CoA = (E)-feruloyl-CoA + AMP + H(+). It carries out the reaction (E)-4-coumarate + ATP + H(+) = (E)-4-coumaroyl-AMP + diphosphate. The catalysed reaction is (E)-4-coumaroyl-AMP + CoA = (E)-4-coumaroyl-CoA + AMP + H(+). The enzyme catalyses (E)-sinapate + ATP + H(+) = (E)-sinapoyl-AMP + diphosphate. It catalyses the reaction (E)-sinapoyl-AMP + CoA = (E)-sinapoyl-CoA + AMP + H(+). It carries out the reaction (E)-caffeate + ATP + H(+) = (E)-caffeoyl-AMP + diphosphate. The catalysed reaction is (E)-caffeoyl-AMP + CoA = (E)-caffeoyl-CoA + AMP + H(+). Its pathway is phytoalexin biosynthesis; 3,4',5-trihydroxystilbene biosynthesis; 3,4',5-trihydroxystilbene from trans-4-coumarate: step 1/2. Involved in the phenylpropanoid metabolism by mediating the activation of a number of hydroxycinnamates for the biosynthesis of monolignols and other phenolic secondary metabolites. Catalyzes the formation of CoA esters of cinnamate, 4-coumarate, caffeate and ferulate. Is also able to convert sinapate to its corresponding CoA ester, a reaction that is rarely observed in 4CL catalysis. Is more efficient with substrates in the following order: ferulate &gt; 4-coumarate &gt; sinapate &gt; caffeate &gt; cinnamate. Follows a two-step reaction mechanism, wherein the carboxylate substrate first undergoes adenylation by ATP, followed by a thioesterification in the presence of CoA to yield the final CoA thioesters. The sequence is that of 4-coumarate--CoA ligase 5 from Oryza sativa subsp. japonica (Rice).